A 636-amino-acid chain; its full sequence is Threonine--tRNA ligase (636 aa).

The 61-residue stretch at 1–61 folds into the TGS domain; that stretch reads MINITLPDDS…RNDCAVRLIT (61 aa). The tract at residues 238 to 528 is catalytic; that stretch reads DHRKIGTRMG…LVEHFAGKFP (291 aa). The Zn(2+) site is built by C329, H380, and H505.

This sequence belongs to the class-II aminoacyl-tRNA synthetase family. Homodimer. Zn(2+) is required as a cofactor.

The protein localises to the cytoplasm. It carries out the reaction tRNA(Thr) + L-threonine + ATP = L-threonyl-tRNA(Thr) + AMP + diphosphate + H(+). In terms of biological role, catalyzes the attachment of threonine to tRNA(Thr) in a two-step reaction: L-threonine is first activated by ATP to form Thr-AMP and then transferred to the acceptor end of tRNA(Thr). Also edits incorrectly charged L-seryl-tRNA(Thr). In Desulforapulum autotrophicum (strain ATCC 43914 / DSM 3382 / VKM B-1955 / HRM2) (Desulfobacterium autotrophicum), this protein is Threonine--tRNA ligase.